A 388-amino-acid polypeptide reads, in one-letter code: Succinate--CoA ligase [ADP-forming] subunit beta (388 aa).

One can recognise an ATP-grasp domain in the interval 9 to 244 (KQLFAQYGLP…PAQNDAREAH (236 aa)). ATP is bound by residues lysine 46, 53 to 55 (GRG), glutamate 99, threonine 102, and glutamate 107. Asparagine 199 and aspartate 213 together coordinate Mg(2+). Residues asparagine 264 and 321–323 (GIV) contribute to the substrate site.

Belongs to the succinate/malate CoA ligase beta subunit family. In terms of assembly, heterotetramer of two alpha and two beta subunits. Requires Mg(2+) as cofactor.

It carries out the reaction succinate + ATP + CoA = succinyl-CoA + ADP + phosphate. The catalysed reaction is GTP + succinate + CoA = succinyl-CoA + GDP + phosphate. The protein operates within carbohydrate metabolism; tricarboxylic acid cycle; succinate from succinyl-CoA (ligase route): step 1/1. In terms of biological role, succinyl-CoA synthetase functions in the citric acid cycle (TCA), coupling the hydrolysis of succinyl-CoA to the synthesis of either ATP or GTP and thus represents the only step of substrate-level phosphorylation in the TCA. The beta subunit provides nucleotide specificity of the enzyme and binds the substrate succinate, while the binding sites for coenzyme A and phosphate are found in the alpha subunit. The polypeptide is Succinate--CoA ligase [ADP-forming] subunit beta (Edwardsiella ictaluri (strain 93-146)).